A 275-amino-acid polypeptide reads, in one-letter code: Formamidopyrimidine-DNA glycosylase (275 aa).

The Schiff-base intermediate with DNA role is filled by Pro2. Glu3 acts as the Proton donor in catalysis. Lys58 serves as the catalytic Proton donor; for beta-elimination activity. Residues His91 and Arg110 each contribute to the DNA site. The segment at 238 to 272 (QVYGQTGKPCPRCGQAIVKLKVGGRGTHICPKCQK) adopts an FPG-type zinc-finger fold. Residue Arg262 is the Proton donor; for delta-elimination activity of the active site.

Belongs to the FPG family. As to quaternary structure, monomer. Zn(2+) serves as cofactor.

The enzyme catalyses Hydrolysis of DNA containing ring-opened 7-methylguanine residues, releasing 2,6-diamino-4-hydroxy-5-(N-methyl)formamidopyrimidine.. The catalysed reaction is 2'-deoxyribonucleotide-(2'-deoxyribose 5'-phosphate)-2'-deoxyribonucleotide-DNA = a 3'-end 2'-deoxyribonucleotide-(2,3-dehydro-2,3-deoxyribose 5'-phosphate)-DNA + a 5'-end 5'-phospho-2'-deoxyribonucleoside-DNA + H(+). Involved in base excision repair of DNA damaged by oxidation or by mutagenic agents. Acts as a DNA glycosylase that recognizes and removes damaged bases. Has a preference for oxidized purines, such as 7,8-dihydro-8-oxoguanine (8-oxoG). Has AP (apurinic/apyrimidinic) lyase activity and introduces nicks in the DNA strand. Cleaves the DNA backbone by beta-delta elimination to generate a single-strand break at the site of the removed base with both 3'- and 5'-phosphates. The polypeptide is Formamidopyrimidine-DNA glycosylase (Streptococcus pyogenes serotype M18 (strain MGAS8232)).